The primary structure comprises 156 residues: Probable cyclic pyranopterin monophosphate synthase (156 aa).

Substrate contacts are provided by residues 74–76 and 110–111; these read LCH and ME. D125 is a catalytic residue.

This sequence belongs to the MoaC family. Homohexamer; trimer of dimers.

It catalyses the reaction (8S)-3',8-cyclo-7,8-dihydroguanosine 5'-triphosphate = cyclic pyranopterin phosphate + diphosphate. Its pathway is cofactor biosynthesis; molybdopterin biosynthesis. In terms of biological role, catalyzes the conversion of (8S)-3',8-cyclo-7,8-dihydroguanosine 5'-triphosphate to cyclic pyranopterin monophosphate (cPMP). This Thermococcus onnurineus (strain NA1) protein is Probable cyclic pyranopterin monophosphate synthase.